Reading from the N-terminus, the 170-residue chain is uncharacterized protein (170 aa).

This is an uncharacterized protein from Homo sapiens (Human).